The sequence spans 467 residues: Uronate isomerase (467 aa).

This sequence belongs to the metallo-dependent hydrolases superfamily. Uronate isomerase family.

The catalysed reaction is D-glucuronate = D-fructuronate. It catalyses the reaction aldehydo-D-galacturonate = keto-D-tagaturonate. Its pathway is carbohydrate metabolism; pentose and glucuronate interconversion. This Histophilus somni (strain 2336) (Haemophilus somnus) protein is Uronate isomerase.